A 589-amino-acid chain; its full sequence is Carbonic anhydrase (589 aa).

2 Alpha-carbonic anhydrase domains span residues 59–316 (HDYN…YEYK) and 321–585 (DKYN…YGYN). A substrate-binding site is contributed by 258 to 259 (TT). The interval 390–589 (MQINFGDPPA…TVYGYNGAAA (200 aa)) is catalytic. 3 residues coordinate Zn(2+): His-420, His-422, and His-440.

This sequence belongs to the alpha-carbonic anhydrase family. Zn(2+) serves as cofactor.

The catalysed reaction is hydrogencarbonate + H(+) = CO2 + H2O. Functionally, reversible hydration of carbon dioxide. The polypeptide is Carbonic anhydrase (DCA) (Dunaliella salina (Green alga)).